Consider the following 183-residue polypeptide: Peptide deformylase (183 aa).

Cys110 and His153 together coordinate Fe cation. Glu154 is a catalytic residue. A Fe cation-binding site is contributed by His157.

Belongs to the polypeptide deformylase family. Fe(2+) serves as cofactor.

It catalyses the reaction N-terminal N-formyl-L-methionyl-[peptide] + H2O = N-terminal L-methionyl-[peptide] + formate. Removes the formyl group from the N-terminal Met of newly synthesized proteins. Requires at least a dipeptide for an efficient rate of reaction. N-terminal L-methionine is a prerequisite for activity but the enzyme has broad specificity at other positions. The sequence is that of Peptide deformylase from Listeria welshimeri serovar 6b (strain ATCC 35897 / DSM 20650 / CCUG 15529 / CIP 8149 / NCTC 11857 / SLCC 5334 / V8).